A 121-amino-acid polypeptide reads, in one-letter code: Holin-like protein CidA (121 aa).

The next 4 membrane-spanning stretches (helical) occupy residues 3–23 (WWKL…GEWI), 30–50 (PVPG…FNLV), 58–78 (GADF…VAVI), and 89–109 (IDLI…TGLL).

This sequence belongs to the CidA/LrgA family. CidA subfamily.

The protein resides in the cell membrane. Functionally, increases the activity of extracellular murein hydrolases possibly by mediating their export via hole formation. Inhibited by the antiholin-like proteins LrgAB. In an unstressed cell, the LrgAB products probably inhibit the function of the CidA protein. When a cell is stressed by the addition of antibiotics or by other factors in the environment, CidA possibly oligomerizes within the bacterial cell membrane, creating lesions that disrupt the proton motive force, which in turn results in loss of cell viability. These lesions are also hypothesized to regulate the subsequent cell lysis by either allowing the murein hydrolases access to the cell wall substrate and/or regulating their activity by a possible change in the cell wall pH that results from loss of membrane potential. The sequence is that of Holin-like protein CidA from Bacillus cereus (strain ATCC 10987 / NRS 248).